A 351-amino-acid chain; its full sequence is Transmembrane and coiled-coil domain-containing protein 5B (351 aa).

A coiled-coil region spans residues 17-214; it reads EIPKLEITKQ…WRSSIQSAKT (198 aa). The helical transmembrane segment at 292–312 threads the bilayer; that stretch reads IFVVMIFFRLLGYVLFYLQYI.

The protein belongs to the TMCO5 family.

It localises to the membrane. This Bos taurus (Bovine) protein is Transmembrane and coiled-coil domain-containing protein 5B (TMCO5B).